Reading from the N-terminus, the 409-residue chain is Dipeptidase 1 (409 aa).

An N-terminal signal peptide occupies residues 1–16 (MWTSWWLWPLVAVCAA). Zn(2+) contacts are provided by His36 and Asp38. Asn57 carries N-linked (GlcNAc...) asparagine glycosylation. Cysteines 87 and 170 form a disulfide. Glu141 lines the Zn(2+) pocket. His168 contacts substrate. 2 residues coordinate Zn(2+): His214 and His235. Cysteines 242 and 274 form a disulfide. Substrate is bound at residue Arg246. The N-linked (GlcNAc...) asparagine glycan is linked to Asn279. Asp304 is a substrate binding site. Ser384 carries the GPI-anchor amidated serine lipid modification. Residues 385–409 (AAPSLHLPPGSLLASLVPLLLLSLP) constitute a propeptide, removed in mature form.

The protein belongs to the metallo-dependent hydrolases superfamily. Peptidase M19 family. In terms of assembly, homodimer; disulfide-linked. The cofactor is Zn(2+).

The protein resides in the apical cell membrane. Its subcellular location is the cell projection. It is found in the microvillus membrane. It localises to the cell membrane. It carries out the reaction an L-aminoacyl-L-amino acid + H2O = 2 an L-alpha-amino acid. It catalyses the reaction leukotriene D4 + H2O = leukotriene E4 + glycine. The enzyme catalyses L-cystine-bis-glycine + 2 H2O = L-cystine + 2 glycine. The catalysed reaction is a beta-lactam + H2O = a substituted beta-amino acid. It carries out the reaction glycyldehydrophenylalanine + H2O = 2,3-didehydrophenylalanine + glycine. Its activity is regulated as follows. Inhibited by L-penicillamine. Inhibited by cilastatin. Its function is as follows. Hydrolyzes a wide range of dipeptides. Hydrolyzes the conversion of leukotriene D4 to leukotriene E4. Hydrolyzes cystinyl-bis-glycine (cys-bis-gly) formed during glutathione degradation. Also possesses beta lactamase activity and hydrolytically inactivates beta-lactam antibiotics. In terms of biological role, independently of its dipeptidase activity, acts as an adhesion receptor for neutrophil recruitment from bloodstream into inflamed lungs and liver. This is Dipeptidase 1 (DPEP1) from Sus scrofa (Pig).